The chain runs to 335 residues: Anthranilate phosphoribosyltransferase (335 aa).

5-phospho-alpha-D-ribose 1-diphosphate contacts are provided by residues Gly79, 82–83 (GD), Ser87, 89–92 (NIST), 107–115 (KHGNRSISS), and Ser119. Position 79 (Gly79) interacts with anthranilate. Ser91 contacts Mg(2+). Asn110 provides a ligand contact to anthranilate. Arg165 serves as a coordination point for anthranilate. Residues Asp224 and Glu225 each coordinate Mg(2+).

This sequence belongs to the anthranilate phosphoribosyltransferase family. Homodimer. The cofactor is Mg(2+).

It carries out the reaction N-(5-phospho-beta-D-ribosyl)anthranilate + diphosphate = 5-phospho-alpha-D-ribose 1-diphosphate + anthranilate. It functions in the pathway amino-acid biosynthesis; L-tryptophan biosynthesis; L-tryptophan from chorismate: step 2/5. Catalyzes the transfer of the phosphoribosyl group of 5-phosphorylribose-1-pyrophosphate (PRPP) to anthranilate to yield N-(5'-phosphoribosyl)-anthranilate (PRA). The polypeptide is Anthranilate phosphoribosyltransferase (Streptococcus mutans serotype c (strain ATCC 700610 / UA159)).